The primary structure comprises 259 residues: UPF0246 protein PSPA7_1607 (259 aa).

It belongs to the UPF0246 family.

This Pseudomonas paraeruginosa (strain DSM 24068 / PA7) (Pseudomonas aeruginosa (strain PA7)) protein is UPF0246 protein PSPA7_1607.